The primary structure comprises 645 residues: Minor extracellular protease Epr (645 aa).

A signal peptide spans 1–27 (MKNMSCKLVVSVTLFFSFLTIGPLAHA). The propeptide occupies 28-103 (QNSSEKEVIV…AADSTDFKVL (76 aa)). One can recognise a Peptidase S8 domain in the interval 115-382 (QWNLEPIQVK…YGLIQYKAQA (268 aa)). Catalysis depends on charge relay system residues Asp-142, His-172, and Ser-326. Disordered stretches follow at residues 490-577 (KQAK…KTAL) and 591-645 (AEAK…KPKK). Over residues 491 to 508 (QAKDKVAKAEKSKKKTDV) the composition is skewed to basic and acidic residues. Positions 522–547 (SEKTSLQKRLNKVKSTNLKTAQQSVS) are enriched in polar residues. Residues 592–610 (EAKKVETAKAKVKKAEKDK) are compositionally biased toward basic and acidic residues.

Belongs to the peptidase S8 family. Post-translationally, may undergo two steps of processing in its passage through the cell membrane: removal of the N-terminal signal sequence and cleavage of the C-terminal domain. Several active forms of Epr with molecular masses between 40 and 34 kDa were found in the medium of B.subtilis cultures. The size variation of the active forms expressed by the complete epr gene appears to be the result of partial removal of the C-terminus either by processing or degradation.

It localises to the secreted. The protein resides in the cell wall. Requires Ca(2+) for stability. Activity is inhibited by phenylmethylsulfonyl fluoride (PMSF) and EDTA. Its function is as follows. Serine protease. Involved in the production of the competence and sporulation stimulating factor CSF. In addition, is essential for swarming motility. Plays a key role in DegU-mediated swarming motility. The protease activity is dispensable for swarming. Not essential for growth or sporulation. The protein is Minor extracellular protease Epr of Bacillus subtilis (strain 168).